Reading from the N-terminus, the 271-residue chain is NH(3)-dependent NAD(+) synthetase (271 aa).

Residue 43–50 (GISGGQDS) coordinates ATP. Residue Asp49 coordinates Mg(2+). Residue Arg136 coordinates deamido-NAD(+). Thr156 contacts ATP. A Mg(2+)-binding site is contributed by Glu161. Residues Lys169 and Asp176 each contribute to the deamido-NAD(+) site. ATP is bound by residues Lys185 and Thr207. Residue 256–257 (HK) participates in deamido-NAD(+) binding.

It belongs to the NAD synthetase family. As to quaternary structure, homodimer.

The enzyme catalyses deamido-NAD(+) + NH4(+) + ATP = AMP + diphosphate + NAD(+) + H(+). It functions in the pathway cofactor biosynthesis; NAD(+) biosynthesis; NAD(+) from deamido-NAD(+) (ammonia route): step 1/1. Its function is as follows. Catalyzes the ATP-dependent amidation of deamido-NAD to form NAD. Uses ammonia as a nitrogen source. This chain is NH(3)-dependent NAD(+) synthetase, found in Tropheryma whipplei (strain TW08/27) (Whipple's bacillus).